Reading from the N-terminus, the 256-residue chain is 5'-nucleotidase SurE (256 aa).

A divalent metal cation is bound by residues D8, D9, S40, and N92.

It belongs to the SurE nucleotidase family. The cofactor is a divalent metal cation.

It is found in the cytoplasm. It catalyses the reaction a ribonucleoside 5'-phosphate + H2O = a ribonucleoside + phosphate. In terms of biological role, nucleotidase that shows phosphatase activity on nucleoside 5'-monophosphates. The protein is 5'-nucleotidase SurE of Allorhizobium ampelinum (strain ATCC BAA-846 / DSM 112012 / S4) (Agrobacterium vitis (strain S4)).